The sequence spans 163 residues: Phosphopantetheine adenylyltransferase (163 aa).

A substrate-binding site is contributed by Thr10. ATP is bound by residues 10-11 and His18; that span reads TF. Lys42, Leu74, and Arg88 together coordinate substrate. Residues 89–91, Glu99, and 124–130 contribute to the ATP site; these read GLR and NSFISST.

It belongs to the bacterial CoaD family. As to quaternary structure, homohexamer. Mg(2+) is required as a cofactor.

The protein resides in the cytoplasm. The enzyme catalyses (R)-4'-phosphopantetheine + ATP + H(+) = 3'-dephospho-CoA + diphosphate. Its pathway is cofactor biosynthesis; coenzyme A biosynthesis; CoA from (R)-pantothenate: step 4/5. In terms of biological role, reversibly transfers an adenylyl group from ATP to 4'-phosphopantetheine, yielding dephospho-CoA (dPCoA) and pyrophosphate. The polypeptide is Phosphopantetheine adenylyltransferase (Shewanella sp. (strain MR-4)).